The primary structure comprises 333 residues: Ketol-acid reductoisomerase (NADP(+)) (333 aa).

Positions 6-186 (TRVYTECDAD…GALRAGAIQT (181 aa)) constitute a KARI N-terminal Rossmann domain. NADP(+)-binding positions include 29–32 (YGSQ), K52, S55, S57, and 87–90 (DPAQ). H112 is a catalytic residue. Residue G138 participates in NADP(+) binding. The 146-residue stretch at 187–332 (TFTEETETDL…ARLRALFSWS (146 aa)) folds into the KARI C-terminal knotted domain. Residues D195, E199, E231, and E235 each contribute to the Mg(2+) site. S256 is a substrate binding site.

Belongs to the ketol-acid reductoisomerase family. The cofactor is Mg(2+).

The catalysed reaction is (2R)-2,3-dihydroxy-3-methylbutanoate + NADP(+) = (2S)-2-acetolactate + NADPH + H(+). It carries out the reaction (2R,3R)-2,3-dihydroxy-3-methylpentanoate + NADP(+) = (S)-2-ethyl-2-hydroxy-3-oxobutanoate + NADPH + H(+). Its pathway is amino-acid biosynthesis; L-isoleucine biosynthesis; L-isoleucine from 2-oxobutanoate: step 2/4. It functions in the pathway amino-acid biosynthesis; L-valine biosynthesis; L-valine from pyruvate: step 2/4. Its function is as follows. Involved in the biosynthesis of branched-chain amino acids (BCAA). Catalyzes an alkyl-migration followed by a ketol-acid reduction of (S)-2-acetolactate (S2AL) to yield (R)-2,3-dihydroxy-isovalerate. In the isomerase reaction, S2AL is rearranged via a Mg-dependent methyl migration to produce 3-hydroxy-3-methyl-2-ketobutyrate (HMKB). In the reductase reaction, this 2-ketoacid undergoes a metal-dependent reduction by NADPH to yield (R)-2,3-dihydroxy-isovalerate. In Tropheryma whipplei (strain Twist) (Whipple's bacillus), this protein is Ketol-acid reductoisomerase (NADP(+)).